The following is a 366-amino-acid chain: MSGNTIGKLFTVTTFGESHGPALGCIVDGCPPGLALSEADLQHDLYRRRPGQSRHTTQRRESDTVKILSGVFEGLTTGTPIGLLIENEDQRSKDYASIADRFRPGHADYTYHMKYGFRDYRGGGRSSARETAMRVAAGGIAKKYLRERLGVEIRGYLAQLGPIRIDPVDWNAIDDNPFFCPDPARVPELEAYMDALRKEGDSSGARVNVVARGVPPGLGEPVFDRLDAELAYALMSINAVKGVEIGAGFGCVEAKGSVFRDEMSPEGFLGNSAGGILGGISTGQDIVASIALKPTSSLRLPGRSVNIRGESVEVVTTGRHDPCVGIRATPIAEAMMAIVLMDHYLRHRGQNQDVVRTLDPIPPSAF.

2 residues coordinate NADP(+): Arg-48 and Arg-54. Residues 125-127, 238-239, Gly-278, 293-297, and Arg-319 each bind FMN; these read RSS, NA, and KPTSS.

It belongs to the chorismate synthase family. In terms of assembly, homotetramer. Requires FMNH2 as cofactor.

It carries out the reaction 5-O-(1-carboxyvinyl)-3-phosphoshikimate = chorismate + phosphate. It functions in the pathway metabolic intermediate biosynthesis; chorismate biosynthesis; chorismate from D-erythrose 4-phosphate and phosphoenolpyruvate: step 7/7. Its function is as follows. Catalyzes the anti-1,4-elimination of the C-3 phosphate and the C-6 proR hydrogen from 5-enolpyruvylshikimate-3-phosphate (EPSP) to yield chorismate, which is the branch point compound that serves as the starting substrate for the three terminal pathways of aromatic amino acid biosynthesis. This reaction introduces a second double bond into the aromatic ring system. The polypeptide is Chorismate synthase (Methylococcus capsulatus (strain ATCC 33009 / NCIMB 11132 / Bath)).